The chain runs to 258 residues: Hydroxyacylglutathione hydrolase (258 aa).

Zn(2+)-binding residues include histidine 54, histidine 56, aspartate 58, histidine 59, histidine 113, aspartate 138, and histidine 176.

Belongs to the metallo-beta-lactamase superfamily. Glyoxalase II family. Monomer. It depends on Zn(2+) as a cofactor.

It catalyses the reaction an S-(2-hydroxyacyl)glutathione + H2O = a 2-hydroxy carboxylate + glutathione + H(+). Its pathway is secondary metabolite metabolism; methylglyoxal degradation; (R)-lactate from methylglyoxal: step 2/2. Functionally, thiolesterase that catalyzes the hydrolysis of S-D-lactoyl-glutathione to form glutathione and D-lactic acid. The protein is Hydroxyacylglutathione hydrolase of Synechococcus sp. (strain ATCC 27144 / PCC 6301 / SAUG 1402/1) (Anacystis nidulans).